The chain runs to 61 residues: Ubiquinol-cytochrome c reductase complex assembly factor 6 (61 aa).

Residues 1–9 (MPAGVSWGQ) are Mitochondrial matrix-facing. A helical membrane pass occupies residues 10-32 (YLKFLGCALASMMAGSQAVHLYY). The Mitochondrial intermembrane segment spans residues 33–61 (KPLEDLRVYIEQEQHSTQVDPTAKPPESA).

It belongs to the UQCC6 family. Interacts with sloth1; the interaction stabilizes both components. As to expression, expressed in the brain.

The protein resides in the mitochondrion inner membrane. It localises to the mitochondrion. Functionally, required for the assembly and stability of the mitochondrial ubiquinol-cytochrome c reductase complex (complex III (CIII) or cytochrome b-c1 complex), a multisubunit transmembrane complex that is part of the mitochondrial electron transport chain (ETC) which drives oxidative phosphorylation. This Drosophila melanogaster (Fruit fly) protein is Ubiquinol-cytochrome c reductase complex assembly factor 6.